We begin with the raw amino-acid sequence, 298 residues long: Tyrosine recombinase XerC (298 aa).

The Core-binding (CB) domain occupies 1 to 83 (MHAAVERFLH…ALSRFADHLV (83 aa)). Residues 104–283 (HLPRPVDVDQ…DWQHLADAYD (180 aa)) enclose the Tyr recombinase domain. Active-site residues include Arg-144, Lys-166, His-235, Arg-238, and His-261. Tyr-270 serves as the catalytic O-(3'-phospho-DNA)-tyrosine intermediate.

It belongs to the 'phage' integrase family. XerC subfamily. In terms of assembly, forms a cyclic heterotetrameric complex composed of two molecules of XerC and two molecules of XerD.

It localises to the cytoplasm. Its function is as follows. Site-specific tyrosine recombinase, which acts by catalyzing the cutting and rejoining of the recombining DNA molecules. The XerC-XerD complex is essential to convert dimers of the bacterial chromosome into monomers to permit their segregation at cell division. It also contributes to the segregational stability of plasmids. This Chromohalobacter salexigens (strain ATCC BAA-138 / DSM 3043 / CIP 106854 / NCIMB 13768 / 1H11) protein is Tyrosine recombinase XerC.